Here is a 109-residue protein sequence, read N- to C-terminus: Phosphoribosyl-ATP pyrophosphatase (109 aa).

Belongs to the PRA-PH family.

The protein resides in the cytoplasm. It catalyses the reaction 1-(5-phospho-beta-D-ribosyl)-ATP + H2O = 1-(5-phospho-beta-D-ribosyl)-5'-AMP + diphosphate + H(+). It functions in the pathway amino-acid biosynthesis; L-histidine biosynthesis; L-histidine from 5-phospho-alpha-D-ribose 1-diphosphate: step 2/9. The protein is Phosphoribosyl-ATP pyrophosphatase of Marinobacter nauticus (strain ATCC 700491 / DSM 11845 / VT8) (Marinobacter aquaeolei).